Here is a 1939-residue protein sequence, read N- to C-terminus: Myosin-2 (1939 aa).

The Myosin N-terminal SH3-like domain occupies 33 to 82 (DAKTSVFVAEPKESFVKGTIQSREGGKVTVKTEAGATLTVKEDQVFPMNP). A phosphothreonine mark is found at threonine 64 and threonine 69. Residues 86 to 782 (DKIEDMAMMT…LLGLLEEMRD (697 aa)) enclose the Myosin motor domain. Lysine 130 carries the N6,N6,N6-trimethyllysine modification. 179-186 (GESGAGKT) contacts ATP. Tyrosine 389 carries the post-translational modification Phosphotyrosine. Phosphoserine is present on serine 392. A Phosphothreonine modification is found at threonine 419. Serine 625 is subject to Phosphoserine. The tract at residues 659-681 (LNKLMTNLRSTHPHFVRCIIPNE) is actin-binding. At histidine 757 the chain carries Pros-methylhistidine. Positions 761–775 (KFGHTKVFFKAGLLG) are actin-binding. The 30-residue stretch at 785 to 814 (LAQLITRTQARCRGFLARVEYQKMVERRES) folds into the IQ domain. The stretch at 843–1939 (LLKSAESEKE…EVHTKVISEE (1097 aa)) forms a coiled coil. Residues serine 1092 and serine 1096 each carry the phosphoserine modification. 2 disordered regions span residues 1126–1147 (IEAE…SREL) and 1153–1172 (RLEE…KKRE). A compositionally biased stretch (basic and acidic residues) spans 1128–1147 (AERASRAKAEKQRSDLSREL). Phosphoserine occurs at positions 1162 and 1237. Residue threonine 1241 is modified to Phosphothreonine. Serine 1243 is subject to Phosphoserine. The residue at position 1255 (threonine 1255) is a Phosphothreonine. Serine 1261 carries the phosphoserine modification. Threonine 1286 carries the phosphothreonine modification. Residues serine 1288, serine 1292, serine 1303, and serine 1306 each carry the phosphoserine modification. Tyrosine 1464 carries the phosphotyrosine modification. Threonine 1467 is modified (phosphothreonine). Serine 1474 carries the post-translational modification Phosphoserine. Tyrosine 1492 bears the Phosphotyrosine mark. Phosphoserine is present on serine 1495. Threonine 1501 is subject to Phosphothreonine. Serine 1514 bears the Phosphoserine mark. Threonine 1517 bears the Phosphothreonine mark. Phosphoserine is present on residues serine 1542, serine 1554, serine 1574, serine 1600, serine 1603, serine 1714, and serine 1726. Threonine 1730 and threonine 1736 each carry phosphothreonine. The residue at position 1739 (serine 1739) is a Phosphoserine. The tract at residues 1885-1915 (QAEEAEEQSNTNLSKFRKLQHELEEAEERAD) is disordered.

Belongs to the TRAFAC class myosin-kinesin ATPase superfamily. Myosin family. As to quaternary structure, muscle myosin is a hexameric protein that consists of 2 heavy chain subunits (MHC), 2 alkali light chain subunits (MLC) and 2 regulatory light chain subunits (MLC-2). Interacts with GCSAM.

The protein localises to the cytoplasm. The protein resides in the myofibril. Functionally, myosins are actin-based motor molecules with ATPase activity essential for muscle contraction. This is Myosin-2 (MYH2) from Sus scrofa (Pig).